A 610-amino-acid chain; its full sequence is Sulfite reductase [NADPH] flavoprotein alpha-component (610 aa).

Residues Ile68 to Val206 enclose the Flavodoxin-like domain. Residues Ser74–Ala79, Ser121–Gly124, and Leu157–Ala166 each bind FMN. An FAD-binding FR-type domain is found at Glu243–Pro459. Residues Thr331, Ser365, Arg397–Ser400, Thr415–Ser417, Tyr421, and Gly430–Ser433 each bind FAD. NADP(+) contacts are provided by residues Ser530–Arg531, Lys536–Gln540, and Asp572. Residue Tyr610 coordinates FAD.

Belongs to the NADPH-dependent sulphite reductase flavoprotein subunit CysJ family. This sequence in the N-terminal section; belongs to the flavodoxin family. The protein in the C-terminal section; belongs to the flavoprotein pyridine nucleotide cytochrome reductase family. In terms of assembly, alpha(8)-beta(8). The alpha component is a flavoprotein, the beta component is a hemoprotein. The cofactor is FAD. FMN serves as cofactor.

The catalysed reaction is hydrogen sulfide + 3 NADP(+) + 3 H2O = sulfite + 3 NADPH + 4 H(+). It functions in the pathway sulfur metabolism; hydrogen sulfide biosynthesis; hydrogen sulfide from sulfite (NADPH route): step 1/1. Component of the sulfite reductase complex that catalyzes the 6-electron reduction of sulfite to sulfide. This is one of several activities required for the biosynthesis of L-cysteine from sulfate. The flavoprotein component catalyzes the electron flow from NADPH -&gt; FAD -&gt; FMN to the hemoprotein component. The chain is Sulfite reductase [NADPH] flavoprotein alpha-component from Blochmanniella floridana.